The primary structure comprises 408 residues: Serine/threonine-protein kinase ATG1t (408 aa).

The 266-residue stretch at 7-272 (YIAKSKLSES…GRIKNSRVWV (266 aa)) folds into the Protein kinase domain. ATP contacts are provided by residues 13–21 (LSESLTSTV) and Lys36. The active-site Proton acceptor is the Asp129.

It belongs to the protein kinase superfamily. Ser/Thr protein kinase family.

Its subcellular location is the cytoplasmic vesicle. The protein resides in the autophagosome. In terms of biological role, serine/threonine protein kinase involved in autophagy. The ATG1-ATG13 protein kinase complex regulates downstream events required for autophagosome enclosure and/or vacuolar delivery. This Arabidopsis thaliana (Mouse-ear cress) protein is Serine/threonine-protein kinase ATG1t.